The sequence spans 268 residues: Elongation factor Ts (268 aa).

Residues 81 to 84 (TDFV) form an involved in Mg(2+) ion dislocation from EF-Tu region.

Belongs to the EF-Ts family.

Its subcellular location is the cytoplasm. In terms of biological role, associates with the EF-Tu.GDP complex and induces the exchange of GDP to GTP. It remains bound to the aminoacyl-tRNA.EF-Tu.GTP complex up to the GTP hydrolysis stage on the ribosome. The protein is Elongation factor Ts of Buchnera aphidicola subsp. Acyrthosiphon pisum (strain 5A).